Consider the following 688-residue polypeptide: MGEKRTIIKALKNSAASHFIKKLTADTSLSSIQEAINVVQQYNATDPVRLKLFHTPRMVSQGAHFAFCLPTKKPHYKPLLLSQNALDEFNLVQDQDLEKILSGEKVYYSDSIFPYSTVYSGFQFGSFAAQLGDGRVVNLFDLKDKCSGQWQTFQLKGAGMTPFSRFADGKAVLRSSIREFIMSEALHSIGIPSTRAMQLTLLPGTKAQRRNQEPCAVVCRFAPSWIRLGNFNLFRWRHDLKGLIQLSDYCIEELFAGGTQFEGKPDFNIFKRDFFPDTETKIDEQVEKDETEVSTMTGDNISTLSKYDEFFRHVVSLNANTVAHWQAYGFANGVLNTDNTSIMGLTIDYGPFAFLDKFEPSFTPNHDDTAKRYSFANQPSIIWWNLQQFAKDLACLLGPEARDLELLLKGELNSVDDALEKTMIERVQKLVELSANEYKYVFTTRYAQIMSQRLGVDLDLEKCMSSTNLKDIEHAAEKAKEFCDVIVEPLLDILQATKVDYNNFFIHLQNYKGPFFIKDKSDTATLFGAFDEEYLGMFFNSKQLQQMAETEEAFAAGEKVFDANGELRLLNEKLQEIRNWTQDYLTLVPPTETAARASLAKKANPLFVPRSWVLEEVVDDLMYSQRDGLQDPSSELDTSALKKLYLMSVNPYDRTKWDVTLRPELETKWADLSHQDDAKFMMQASCSS.

The transit peptide at 1–23 (MGEKRTIIKALKNSAASHFIKKL) directs the protein to the mitochondrion. 8 residues coordinate ATP: Gly132, Gly134, Arg135, Lys156, Asp168, Gly169, Arg220, and Arg227. Asp338 functions as the Proton acceptor in the catalytic mechanism. Mg(2+) is bound by residues Asn339 and Asp348. Residue Asp348 participates in ATP binding.

The protein belongs to the SELO family. Mg(2+) is required as a cofactor. In terms of processing, forms probably one or more intrachain disulfide bridges.

It localises to the mitochondrion. The catalysed reaction is L-tyrosyl-[protein] + ATP = O-(5'-adenylyl)-L-tyrosyl-[protein] + diphosphate. Catalyzes the transfer of adenosine 5'-monophosphate (AMP) to Tyr residues of target mitochondrial proteins (AMPylation). Involved in redox homeostasis by regulating the cellular response to oxidative stress. Regulates protein S-glutathionylation levels possibly by AMPylation of deglutathionylation enzymes such as glutaredoxins. The protein is Protein adenylyltransferase SelO, mitochondrial of Saccharomyces cerevisiae (strain ATCC 204508 / S288c) (Baker's yeast).